A 130-amino-acid chain; its full sequence is Small ribosomal subunit protein uS9 (130 aa).

It belongs to the universal ribosomal protein uS9 family.

This Variovorax paradoxus (strain S110) protein is Small ribosomal subunit protein uS9.